A 212-amino-acid polypeptide reads, in one-letter code: COP9 signalosome complex subunit 8 (212 aa).

The PCI domain maps to 26-193 (TSLSAYEEQA…KPVVTAPPKD (168 aa)).

This sequence belongs to the CSN8 family. Component of the COP9 signalosome (CSN) complex.

The protein localises to the cytoplasm. It localises to the nucleus. Its function is as follows. Component of the COP9 signalosome (CSN) complex that acts as an regulator of the ubiquitin (Ubl) conjugation pathway by mediating the deneddylation of the cullin subunit of SCF-type E3 ubiquitin-protein ligase complexes. The CSN complex seems to link protein degradation to sexual development. This chain is COP9 signalosome complex subunit 8 (csnH), found in Emericella nidulans (strain FGSC A4 / ATCC 38163 / CBS 112.46 / NRRL 194 / M139) (Aspergillus nidulans).